Reading from the N-terminus, the 315-residue chain is Zinc transport protein ZntB (315 aa).

Topologically, residues Met-1 to Tyr-250 are cytoplasmic. A helical transmembrane segment spans residues Leu-251–Ile-271. The Periplasmic portion of the chain corresponds to Asn-272–Ser-282. The chain crosses the membrane as a helical span at residues Met-283 to Phe-303. Over Lys-304 to Glu-315 the chain is Cytoplasmic.

This sequence belongs to the CorA metal ion transporter (MIT) (TC 1.A.35) family. Homopentamer. Can assemble pentamers in the absence of the transmembrane regions.

The protein resides in the cell inner membrane. It carries out the reaction Zn(2+)(out) + H(+)(out) = Zn(2+)(in) + H(+)(in). Its function is as follows. Zinc transporter. Acts as a Zn(2+):proton symporter, which likely mediates zinc ion uptake. The protein is Zinc transport protein ZntB of Vibrio parahaemolyticus serotype O3:K6 (strain RIMD 2210633).